The sequence spans 496 residues: L-arabinose isomerase (496 aa).

Mn(2+)-binding residues include Glu-302, Glu-329, His-346, and His-445.

Belongs to the arabinose isomerase family. Requires Mn(2+) as cofactor.

The catalysed reaction is beta-L-arabinopyranose = L-ribulose. It participates in carbohydrate degradation; L-arabinose degradation via L-ribulose; D-xylulose 5-phosphate from L-arabinose (bacterial route): step 1/3. In terms of biological role, catalyzes the conversion of L-arabinose to L-ribulose. This chain is L-arabinose isomerase, found in Thermotoga petrophila (strain ATCC BAA-488 / DSM 13995 / JCM 10881 / RKU-1).